We begin with the raw amino-acid sequence, 334 residues long: MSGFGDFTTICETAPLPLCAAVGPVLQATGRTGIEPECYARNIELANTIIFEGATAVMHIVALVMTVIMILHVRSKFTAVGRKEILSFFYLYMLLSAMSLVIDAGVVPPGSDPYPYLVSVQNGFSSAVITCLLINGFVGFQLYEDGTPLSVWMLRISTLAAFTISFLVSLATFKSWAGLSPTNTVGLFVVLYLLNAIQLFIYVAMQILLVTRTLHDRWPLGDIAFGIFFFVAGQVFLYAFSSKICNAISHYLDGLFLATVCNLLGVMMVYKYWDSITKEDLEFSVGTRMNNWEVKELLPEEERRATVFSEDLYGQNSSYDLPYSPGAARYSAKY.

7 consecutive transmembrane segments (helical) span residues 49–69 (IIFE…TVIM), 88–108 (FFYL…GVVP), 123–143 (GFSS…FQLY), 159–179 (LAAF…WAGL), 185–205 (VGLF…YVAM), 220–240 (LGDI…LYAF), and 250–270 (HYLD…MMVY).

It belongs to the CHS7 family. In terms of assembly, interacts with CHS3.

It is found in the endoplasmic reticulum membrane. In terms of biological role, chaperone required for the export of the chitin synthase CHS3 from the endoplasmic reticulum. The chain is Chitin synthase export chaperone (CHS7) from Gibberella zeae (strain ATCC MYA-4620 / CBS 123657 / FGSC 9075 / NRRL 31084 / PH-1) (Wheat head blight fungus).